A 242-amino-acid chain; its full sequence is tRNA (guanine-N(1)-)-methyltransferase (242 aa).

Residues Gly113 and Ile133–Leu138 each bind S-adenosyl-L-methionine.

The protein belongs to the RNA methyltransferase TrmD family. Homodimer.

The protein localises to the cytoplasm. The catalysed reaction is guanosine(37) in tRNA + S-adenosyl-L-methionine = N(1)-methylguanosine(37) in tRNA + S-adenosyl-L-homocysteine + H(+). Functionally, specifically methylates guanosine-37 in various tRNAs. The polypeptide is tRNA (guanine-N(1)-)-methyltransferase (Shewanella sediminis (strain HAW-EB3)).